The primary structure comprises 389 residues: Chalcone synthase 2 (389 aa).

Residue cysteine 164 is part of the active site.

Belongs to the thiolase-like superfamily. Chalcone/stilbene synthases family.

It catalyses the reaction (E)-4-coumaroyl-CoA + 3 malonyl-CoA + 3 H(+) = 2',4,4',6'-tetrahydroxychalcone + 3 CO2 + 4 CoA. It participates in secondary metabolite biosynthesis; flavonoid biosynthesis. Functionally, the primary product of this enzyme is 4,2',4',6'-tetrahydroxychalcone (also termed naringenin-chalcone or chalcone) which can under specific conditions spontaneously isomerize into naringenin. The chain is Chalcone synthase 2 (CHS2) from Trifolium subterraneum (Subterranean clover).